The following is a 103-amino-acid chain: Large ribosomal subunit protein uL23 (103 aa).

This sequence belongs to the universal ribosomal protein uL23 family. As to quaternary structure, part of the 50S ribosomal subunit. Contacts protein L29, and trigger factor when it is bound to the ribosome.

One of the early assembly proteins it binds 23S rRNA. One of the proteins that surrounds the polypeptide exit tunnel on the outside of the ribosome. Forms the main docking site for trigger factor binding to the ribosome. This chain is Large ribosomal subunit protein uL23, found in Pelodictyon phaeoclathratiforme (strain DSM 5477 / BU-1).